A 481-amino-acid polypeptide reads, in one-letter code: uncharacterized protein (481 aa).

10 helical membrane passes run 32–52 (LSWL…YWGV), 82–102 (FFHW…IMAY), 137–157 (MFLI…AATF), 173–193 (VQAF…WIGI), 204–224 (VGWG…TEFI), 258–278 (WTVF…MFVT), 289–309 (VIWG…GVME), 348–368 (LFLA…MDAV), 392–412 (LFWC…GASL), and 418–438 (TVVL…GGFI).

The protein belongs to the BCCT transporter (TC 2.A.15) family.

The protein resides in the cell inner membrane. In terms of biological role, probable transporter whose substrate is unknown. Is not involved in aerobic D-malate transport. This is an uncharacterized protein from Escherichia coli (strain K12).